We begin with the raw amino-acid sequence, 99 residues long: Large ribosomal subunit protein uL23 (99 aa).

This sequence belongs to the universal ribosomal protein uL23 family. In terms of assembly, part of the 50S ribosomal subunit. Contacts protein L29, and trigger factor when it is bound to the ribosome.

One of the early assembly proteins it binds 23S rRNA. One of the proteins that surrounds the polypeptide exit tunnel on the outside of the ribosome. Forms the main docking site for trigger factor binding to the ribosome. This Agathobacter rectalis (strain ATCC 33656 / DSM 3377 / JCM 17463 / KCTC 5835 / VPI 0990) (Eubacterium rectale) protein is Large ribosomal subunit protein uL23.